Consider the following 214-residue polypeptide: Ribonuclease T (214 aa).

One can recognise an Exonuclease domain in the interval 20–195; it reads VVVDVETAGF…YDTQQTAELF (176 aa). Residues D23, E25, H182, and D187 each coordinate Mg(2+). The active-site Proton donor/acceptor is H182.

Belongs to the RNase T family. As to quaternary structure, homodimer. Mg(2+) is required as a cofactor.

Functionally, trims short 3' overhangs of a variety of RNA species, leaving a one or two nucleotide 3' overhang. Responsible for the end-turnover of tRNA: specifically removes the terminal AMP residue from uncharged tRNA (tRNA-C-C-A). Also appears to be involved in tRNA biosynthesis. The polypeptide is Ribonuclease T (Vibrio campbellii (strain ATCC BAA-1116)).